The primary structure comprises 622 residues: Probable ATP-dependent RNA helicase DDX41 (622 aa).

Basic and acidic residues predominate over residues 1–15; sequence MEDSEPERKRARADE. Disordered regions lie at residues 1 to 39 and 51 to 84; these read MEDS…YVPL and LQRR…PQSN. S4 carries the post-translational modification Phosphoserine. N6-acetyllysine is present on K9. K9 participates in a covalent cross-link: Glycyl lysine isopeptide (Lys-Gly) (interchain with G-Cter in ubiquitin). A phosphoserine mark is found at S21 and S23. The segment covering 24–33 has biased composition (acidic residues); it reads EDEDEDDEDY. Y33 is modified (phosphotyrosine). A Glycyl lysine isopeptide (Lys-Gly) (interchain with G-Cter in ubiquitin) cross-link involves residue K115. The Q motif signature appears at 181-209; the sequence is KSFKEMKFPAAILRGLKKKGILHPTPIQI. Positions 212 to 396 constitute a Helicase ATP-binding domain; the sequence is IPTILSGRDM…KSALVKPVTI (185 aa). 225-232 contributes to the ATP binding site; that stretch reads AFTGSGKT. The DEAD box signature appears at 344–347; it reads DEAD. The Helicase C-terminal domain occupies 407–567; the sequence is DVIQEVEYVK…KVPPVLQVLH (161 aa). Y414 bears the Phosphotyrosine mark. Glycyl lysine isopeptide (Lys-Gly) (interchain with G-Cter in SUMO2) cross-links involve residues K416 and K442. The CCHC-type zinc-finger motif lies at 580 to 597; the sequence is RGCAFCGGLGHRITDCPK.

This sequence belongs to the DEAD box helicase family. DDX41 subfamily. In terms of assembly, identified in the spliceosome C complex. Interacts with ERCC6. Interacts with FAM50A. Interacts with STING1. Interacts with CGAS. Interacts with several spliceosomes components such as PRP19 or CDC5L. In terms of processing, acetylation at Lys-9 regulates the nuclear/cytoplasmic localization. Phosphorylated by BTK; phosphorylation induces binding to dsDNA and STING1. Post-translationally, 'Lys-48'-linked ubiquitinated and degraded by TRIM21 leading to negative regulation of the innate immune response to intracellular dsDNA.

It is found in the nucleus. It localises to the cytoplasm. It carries out the reaction ATP + H2O = ADP + phosphate + H(+). Functionally, multifunctional protein that participates in many aspects of cellular RNA metabolism. Plays pivotal roles in innate immune sensing and hematopoietic homeostasis. Recognizes foreign or self-nucleic acids generated during microbial infection, thereby initiating anti-pathogen responses. Mechanistically, phosphorylation by BTK allows binding to dsDNA leading to interaction with STING1. Modulates the homeostasis of dsDNA through its ATP-dependent DNA-unwinding activity and ATP-independent strand-annealing activity. In turn, induces STING1-mediated type I interferon and cytokine responses to DNA and DNA viruses. During murine leukemia virus infection, primarily senses the DNA/RNA hybrid generated at the first step of reverse transcription, while cGAS recognizes dsDNA generated at the next step and both are needed for the antiretroviral innate immune response. Selectively modulates the transcription of certain immunity-associated genes by regulating their alternative splicing. Binds to RNA (R)-loops, structures consisting of DNA/RNA hybrids and a displaced strand of DNA that occur during transcription, and prevents their accumulation, thereby maintaining genome stability. Also participates in pre-mRNA splicing, translational regulation and snoRNA processing, which is essential for ribosome biogenesis. The polypeptide is Probable ATP-dependent RNA helicase DDX41 (Ddx41) (Mus musculus (Mouse)).